A 202-amino-acid polypeptide reads, in one-letter code: Small ribosomal subunit protein uS4c (202 aa).

Positions 90-153 (MRLDNIIFRL…KSEAIISKNI (64 aa)) constitute an S4 RNA-binding domain.

It belongs to the universal ribosomal protein uS4 family. In terms of assembly, part of the 30S ribosomal subunit. Contacts protein S5. The interaction surface between S4 and S5 is involved in control of translational fidelity.

The protein resides in the plastid. It is found in the chloroplast. Its function is as follows. One of the primary rRNA binding proteins, it binds directly to 16S rRNA where it nucleates assembly of the body of the 30S subunit. In terms of biological role, with S5 and S12 plays an important role in translational accuracy. The sequence is that of Small ribosomal subunit protein uS4c (rps4) from Leucodon sciuroides (Moss).